Consider the following 329-residue polypeptide: Malate dehydrogenase (329 aa).

12-18 (GAAGQIG) serves as a coordination point for NAD(+). Residues arginine 95 and arginine 101 each coordinate substrate. Residues asparagine 108, glutamine 115, and 132–134 (VGN) contribute to the NAD(+) site. Substrate is bound by residues asparagine 134 and arginine 165. The active-site Proton acceptor is the histidine 190.

It belongs to the LDH/MDH superfamily. MDH type 2 family.

It catalyses the reaction (S)-malate + NAD(+) = oxaloacetate + NADH + H(+). Catalyzes the reversible oxidation of malate to oxaloacetate. The chain is Malate dehydrogenase from Polynucleobacter asymbioticus (strain DSM 18221 / CIP 109841 / QLW-P1DMWA-1) (Polynucleobacter necessarius subsp. asymbioticus).